Consider the following 147-residue polypeptide: Hemoglobin anodic subunit beta (147 aa).

A Globin domain is found at 2–147; it reads EWTEDERTAI…VTSALARQYH (146 aa). The heme b site is built by His63 and His92.

It belongs to the globin family. Heterotetramer of two alpha chains and two beta chains. In terms of tissue distribution, red blood cells.

Functionally, involved in oxygen transport from gills to the various peripheral tissues. This is Hemoglobin anodic subunit beta (hbb1) from Anguilla anguilla (European freshwater eel).